The sequence spans 341 residues: Phenylalanine--tRNA ligase alpha subunit (341 aa).

Glu-254 serves as a coordination point for Mg(2+).

Belongs to the class-II aminoacyl-tRNA synthetase family. Phe-tRNA synthetase alpha subunit type 1 subfamily. In terms of assembly, tetramer of two alpha and two beta subunits. The cofactor is Mg(2+).

It localises to the cytoplasm. It carries out the reaction tRNA(Phe) + L-phenylalanine + ATP = L-phenylalanyl-tRNA(Phe) + AMP + diphosphate + H(+). In Chlorobaculum parvum (strain DSM 263 / NCIMB 8327) (Chlorobium vibrioforme subsp. thiosulfatophilum), this protein is Phenylalanine--tRNA ligase alpha subunit.